Here is a 315-residue protein sequence, read N- to C-terminus: 4-hydroxy-3-methylbut-2-enyl diphosphate reductase (315 aa).

Residue C12 participates in [4Fe-4S] cluster binding. (2E)-4-hydroxy-3-methylbut-2-enyl diphosphate contacts are provided by H41 and H74. The dimethylallyl diphosphate site is built by H41 and H74. Positions 41 and 74 each coordinate isopentenyl diphosphate. C96 contacts [4Fe-4S] cluster. H124 is a binding site for (2E)-4-hydroxy-3-methylbut-2-enyl diphosphate. H124 is a binding site for dimethylallyl diphosphate. H124 contacts isopentenyl diphosphate. E126 (proton donor) is an active-site residue. T168 is a binding site for (2E)-4-hydroxy-3-methylbut-2-enyl diphosphate. C198 lines the [4Fe-4S] cluster pocket. (2E)-4-hydroxy-3-methylbut-2-enyl diphosphate-binding residues include S226, S227, N228, and S270. 4 residues coordinate dimethylallyl diphosphate: S226, S227, N228, and S270. Residues S226, S227, N228, and S270 each contribute to the isopentenyl diphosphate site.

This sequence belongs to the IspH family. [4Fe-4S] cluster serves as cofactor.

The catalysed reaction is isopentenyl diphosphate + 2 oxidized [2Fe-2S]-[ferredoxin] + H2O = (2E)-4-hydroxy-3-methylbut-2-enyl diphosphate + 2 reduced [2Fe-2S]-[ferredoxin] + 2 H(+). The enzyme catalyses dimethylallyl diphosphate + 2 oxidized [2Fe-2S]-[ferredoxin] + H2O = (2E)-4-hydroxy-3-methylbut-2-enyl diphosphate + 2 reduced [2Fe-2S]-[ferredoxin] + 2 H(+). The protein operates within isoprenoid biosynthesis; dimethylallyl diphosphate biosynthesis; dimethylallyl diphosphate from (2E)-4-hydroxy-3-methylbutenyl diphosphate: step 1/1. It functions in the pathway isoprenoid biosynthesis; isopentenyl diphosphate biosynthesis via DXP pathway; isopentenyl diphosphate from 1-deoxy-D-xylulose 5-phosphate: step 6/6. In terms of biological role, catalyzes the conversion of 1-hydroxy-2-methyl-2-(E)-butenyl 4-diphosphate (HMBPP) into a mixture of isopentenyl diphosphate (IPP) and dimethylallyl diphosphate (DMAPP). Acts in the terminal step of the DOXP/MEP pathway for isoprenoid precursor biosynthesis. This is 4-hydroxy-3-methylbut-2-enyl diphosphate reductase from Pseudomonas fluorescens (strain SBW25).